Consider the following 111-residue polypeptide: Large ribosomal subunit protein uL22 (111 aa).

The protein belongs to the universal ribosomal protein uL22 family. In terms of assembly, part of the 50S ribosomal subunit.

This protein binds specifically to 23S rRNA; its binding is stimulated by other ribosomal proteins, e.g. L4, L17, and L20. It is important during the early stages of 50S assembly. It makes multiple contacts with different domains of the 23S rRNA in the assembled 50S subunit and ribosome. Its function is as follows. The globular domain of the protein is located near the polypeptide exit tunnel on the outside of the subunit, while an extended beta-hairpin is found that lines the wall of the exit tunnel in the center of the 70S ribosome. The protein is Large ribosomal subunit protein uL22 of Clostridium beijerinckii (strain ATCC 51743 / NCIMB 8052) (Clostridium acetobutylicum).